The chain runs to 129 residues: Large ribosomal subunit protein bL19 (129 aa).

Belongs to the bacterial ribosomal protein bL19 family.

Its function is as follows. This protein is located at the 30S-50S ribosomal subunit interface and may play a role in the structure and function of the aminoacyl-tRNA binding site. This is Large ribosomal subunit protein bL19 from Paraburkholderia phytofirmans (strain DSM 17436 / LMG 22146 / PsJN) (Burkholderia phytofirmans).